We begin with the raw amino-acid sequence, 98 residues long: Large ribosomal subunit protein uL23 (98 aa).

The protein belongs to the universal ribosomal protein uL23 family. Part of the 50S ribosomal subunit. Contacts protein L29, and trigger factor when it is bound to the ribosome.

Functionally, one of the early assembly proteins it binds 23S rRNA. One of the proteins that surrounds the polypeptide exit tunnel on the outside of the ribosome. Forms the main docking site for trigger factor binding to the ribosome. The polypeptide is Large ribosomal subunit protein uL23 (Streptococcus pyogenes serotype M1).